A 311-amino-acid polypeptide reads, in one-letter code: DNA replication terminus site-binding protein (311 aa).

The protein belongs to the Tus family.

The protein resides in the cytoplasm. Functionally, trans-acting protein required for termination of DNA replication. Binds to DNA replication terminator sequences (terA to terF) to prevent the passage of replication forks. The termination efficiency will be affected by the affinity of this protein for the terminator sequence. This chain is DNA replication terminus site-binding protein, found in Yersinia pestis.